The primary structure comprises 423 residues: D-tagatose-1,6-bisphosphate aldolase subunit GatZ (423 aa).

The protein belongs to the GatZ/KbaZ family. GatZ subfamily. Forms a complex with GatY.

The protein operates within carbohydrate metabolism; D-tagatose 6-phosphate degradation; D-glyceraldehyde 3-phosphate and glycerone phosphate from D-tagatose 6-phosphate: step 2/2. Component of the tagatose-1,6-bisphosphate aldolase GatYZ that is required for full activity and stability of the Y subunit. Could have a chaperone-like function for the proper and stable folding of GatY. When expressed alone, GatZ does not show any aldolase activity. Is involved in the catabolism of galactitol. This Salmonella gallinarum (strain 287/91 / NCTC 13346) protein is D-tagatose-1,6-bisphosphate aldolase subunit GatZ.